Here is a 142-residue protein sequence, read N- to C-terminus: Relaxin-3 (142 aa).

The N-terminal stretch at 1 to 25 (MARYKLLLLLAVWVLTGELWPGAEA) is a signal peptide. 3 disulfide bridges follow: Cys35–Cys129, Cys47–Cys142, and Cys128–Cys133. Positions 55–118 (SDILAHEAMG…GTPGALRGSR (64 aa)) are cleaved as a propeptide — connecting peptide.

It belongs to the insulin family. In terms of assembly, heterodimer of a B chain and an A chain linked by two disulfide bonds.

The protein localises to the secreted. Functionally, may play a role in neuropeptide signaling processes. Ligand for LGR7, RXFP3 and RXFP4. In Pan troglodytes (Chimpanzee), this protein is Relaxin-3 (RLN3).